A 338-amino-acid polypeptide reads, in one-letter code: Glycerol-3-phosphate dehydrogenase [NAD(P)+] (338 aa).

Residues Ser13, Trp14, and Lys108 each contribute to the NADPH site. The sn-glycerol 3-phosphate site is built by Lys108, Gly139, and Ser141. Ala143 serves as a coordination point for NADPH. Positions 194, 247, 257, 258, and 259 each coordinate sn-glycerol 3-phosphate. The active-site Proton acceptor is the Lys194. Arg258 provides a ligand contact to NADPH. NADPH-binding residues include Val282 and Glu284.

Belongs to the NAD-dependent glycerol-3-phosphate dehydrogenase family.

The protein resides in the cytoplasm. It catalyses the reaction sn-glycerol 3-phosphate + NAD(+) = dihydroxyacetone phosphate + NADH + H(+). The enzyme catalyses sn-glycerol 3-phosphate + NADP(+) = dihydroxyacetone phosphate + NADPH + H(+). It functions in the pathway membrane lipid metabolism; glycerophospholipid metabolism. In terms of biological role, catalyzes the reduction of the glycolytic intermediate dihydroxyacetone phosphate (DHAP) to sn-glycerol 3-phosphate (G3P), the key precursor for phospholipid synthesis. This chain is Glycerol-3-phosphate dehydrogenase [NAD(P)+], found in Streptococcus pneumoniae (strain Hungary19A-6).